The sequence spans 229 residues: Peptidase E (229 aa).

Active-site charge relay system residues include S120, D135, and H157.

Belongs to the peptidase S51 family.

The protein resides in the cytoplasm. The enzyme catalyses Dipeptidase E catalyzes the hydrolysis of dipeptides Asp-|-Xaa. It does not act on peptides with N-terminal Glu, Asn or Gln, nor does it cleave isoaspartyl peptides.. In terms of biological role, hydrolyzes dipeptides containing N-terminal aspartate residues. May play a role in allowing the cell to use peptide aspartate to spare carbon otherwise required for the synthesis of the aspartate family of amino acids. The protein is Peptidase E of Salmonella newport (strain SL254).